A 494-amino-acid chain; its full sequence is Cytochrome P450 2A3 (494 aa).

Phosphoserine is present on Ser-131. The residue at position 379 (Lys-379) is an N6-acetyllysine. Heme is bound at residue Cys-439.

This sequence belongs to the cytochrome P450 family. Heme serves as cofactor. In terms of tissue distribution, lung.

It is found in the endoplasmic reticulum membrane. Its subcellular location is the microsome membrane. The enzyme catalyses an organic molecule + reduced [NADPH--hemoprotein reductase] + O2 = an alcohol + oxidized [NADPH--hemoprotein reductase] + H2O + H(+). In terms of biological role, cytochromes P450 are a group of heme-thiolate monooxygenases. In liver microsomes, this enzyme is involved in an NADPH-dependent electron transport pathway. It oxidizes a variety of structurally unrelated compounds, including steroids, fatty acids, and xenobiotics. This is Cytochrome P450 2A3 (Cyp2a3) from Rattus norvegicus (Rat).